A 147-amino-acid polypeptide reads, in one-letter code: MLTLPEYNEQIPNVRSLLTKWAKVERIQDVQDGLQLDVRLKTDTLLELHIYYDHVYHVPSIKFRLWSLDTEEDISSLRLLTLSDSELRSILNLGTFSVTLSTDMEMKSVYYYINNCDTDANVGSDVEHYLTRWISLYIRIFDLNFVP.

The active-site Glycyl thioester intermediate is cysteine 116.

Belongs to the ATG10 family. Forms homooligomers. Interacts with ATG10. Interacts with ATG7 and ATG12.

It localises to the preautophagosomal structure membrane. In terms of biological role, E2-like enzyme required for the cytoplasm to vacuole transport (Cvt), autophagy and nucleophagy. Acts as an E2-like enzyme that catalyzes the conjugation of ATG12 to ATG5. ATG12 conjugation to ATG5 is required for proper localization of ATG8 to the preautophagosomal structure (PAS). Likely serves as an ATG5-recognition molecule. The chain is Ubiquitin-like-conjugating enzyme ATG10 from Kluyveromyces marxianus (strain DMKU3-1042 / BCC 29191 / NBRC 104275) (Yeast).